The primary structure comprises 423 residues: Vitamin D3 receptor (423 aa).

8 residues coordinate Zn(2+): cysteine 24, cysteine 27, cysteine 41, cysteine 44, cysteine 60, cysteine 66, cysteine 76, and cysteine 79. 2 NR C4-type zinc fingers span residues 24 to 44 and 60 to 84; these read CGVCGDRATGFHFNAMTCEGC and CPFNGDCRITKDNRRHCQACRLKRC. The nuclear receptor DNA-binding region spans 24-89; sequence CGVCGDRATG…RLKRCVDIGM (66 aa). The segment at 97 to 126 is hinge; that stretch reads DEEVQRKREMIMKRKEEEALKDSLRPKLSE. An NR LBD domain is found at 127–419; the sequence is EQQHIIAILL…LTPLVLEVFG (293 aa). Calcitriol is bound at residue tyrosine 143. Residues 159–180 form a disordered region; the sequence is MDGSTGSYSPRPTLSFSGNSSS. Positions 171-180 are enriched in low complexity; the sequence is TLSFSGNSSS. Serine 233 is a calcitriol binding site. The tract at residues 242-260 is interaction with coactivator LXXLL motif; it reads KMIPGFRDLTSDDQIVLLK. The calcitriol site is built by arginine 270, serine 274, histidine 301, and histidine 393. A 9aaTAD motif is present at residues 412-420; that stretch reads PLVLEVFGN.

This sequence belongs to the nuclear hormone receptor family. NR1 subfamily. In terms of assembly, homodimer in the absence of bound vitamin D3. Heterodimer with RXRA after vitamin D3 binding. Interacts with MED1 and NCOA6. Interacts with MED1, NCOA1, NCOA2, NCOA3 and NCOA6 coactivators, leading to a strong increase of transcription of target genes. Interacts with the corepressor NCOR1. Interacts with SNW1. Interacts with IRX4, the interaction does not affect its transactivation activity. Interacts with CRY1. Interacts with CRY2 in a ligand-dependent manner. Ubiquitinated by UBR5, leading to its degradation: UBR5 specifically recognizes and binds ligand-bound VDR when it is not associated with coactivators (NCOAs). In presence of NCOAs, the UBR5-degron is not accessible, preventing its ubiquitination and degradation. Detected in intestine and kidney.

The protein resides in the nucleus. Its subcellular location is the cytoplasm. Functionally, nuclear receptor for calcitriol, the active form of vitamin D3 which mediates the action of this vitamin on cells. Enters the nucleus upon vitamin D3 binding where it forms heterodimers with the retinoid X receptor/RXR. The VDR-RXR heterodimers bind to specific response elements on DNA and activate the transcription of vitamin D3-responsive target genes. Plays a central role in calcium homeostasis. Also functions as a receptor for the secondary bile acid lithocholic acid (LCA) and its metabolites. This is Vitamin D3 receptor (Vdr) from Rattus norvegicus (Rat).